The following is a 138-amino-acid chain: Thyrotropin subunit beta (138 aa).

Positions 1-20 (MNAVVLFSVLFALACGQVSS) are cleaved as a signal peptide. 6 disulfide bridges follow: C22-C72, C36-C87, C39-C125, C47-C103, C51-C105, and C108-C115. N-linked (GlcNAc...) asparagine glycosylation is present at N43. A propeptide spanning residues 133–138 (LGGFSG) is cleaved from the precursor.

The protein belongs to the glycoprotein hormones subunit beta family. Heterodimer of a common alpha chain and a unique beta chain which confers biological specificity to thyrotropin, lutropin, follitropin and gonadotropin.

The protein localises to the secreted. Its function is as follows. Indispensable for the control of thyroid structure and metabolism. This is Thyrotropin subunit beta (Tshb) from Rattus norvegicus (Rat).